We begin with the raw amino-acid sequence, 47 residues long: MFKRKSTAELAAQMAKLNGNKGFSSEDKGEWKLKLDNAGNGQAVIRF.

Homodimer in the absence of DNA, monomer when binding DNA.

Functionally, binds preferentially to single-stranded DNA and therefore, destabilizes double-stranded DNA. It is involved in DNA replication, repair and recombination. Binds ss-DNA as the replication fork advances and stimulates the replisome processivity and accuracy. The chain is Single-stranded DNA-binding protein (32) from Escherichia coli (Bacteriophage RB6).